A 204-amino-acid polypeptide reads, in one-letter code: Peptidyl-tRNA hydrolase (204 aa).

Tyr14 serves as a coordination point for tRNA. The Proton acceptor role is filled by His19. TRNA is bound by residues Tyr64, Asn66, and Asn112.

This sequence belongs to the PTH family. As to quaternary structure, monomer.

It is found in the cytoplasm. The catalysed reaction is an N-acyl-L-alpha-aminoacyl-tRNA + H2O = an N-acyl-L-amino acid + a tRNA + H(+). Its function is as follows. Hydrolyzes ribosome-free peptidyl-tRNAs (with 1 or more amino acids incorporated), which drop off the ribosome during protein synthesis, or as a result of ribosome stalling. Functionally, catalyzes the release of premature peptidyl moieties from peptidyl-tRNA molecules trapped in stalled 50S ribosomal subunits, and thus maintains levels of free tRNAs and 50S ribosomes. This Nitrobacter hamburgensis (strain DSM 10229 / NCIMB 13809 / X14) protein is Peptidyl-tRNA hydrolase.